Reading from the N-terminus, the 714-residue chain is 2'-5'-oligoadenylate synthase 2 (714 aa).

The N-myristoyl glycine moiety is linked to residue G2. 2 OAS domain regions span residues 11–336 and 344–683; these read KPSE…SWNV and TPGH…WNVP. S397 is a binding site for ATP. Residues D409 and D480 each coordinate Mg(2+). ATP is bound by residues R544 and K547.

It belongs to the 2-5A synthase family. Homodimer. Mg(2+) is required as a cofactor. In terms of processing, myristoylation is not essential for its activity. Post-translationally, glycosylated. Glycosylation is essential for its activity.

It is found in the cytoplasm. It localises to the perinuclear region. It carries out the reaction 3 ATP = 5'-triphosphoadenylyl-(2'-&gt;5')-adenylyl-(2'-&gt;5')-adenosine + 2 diphosphate. Produced as a latent enzyme which is activated by double stranded RNA (dsRNA) generated during the course of viral infection. The dsRNA activator must be at least 15 nucleotides long, and no modification of the 2'-hydroxyl group is tolerated. ssRNA or dsDNA do not act as activators. Strongly inhibited by copper, iron and zinc ions. Partially inhibited by cobalt and nickel ions. Functionally, interferon-induced, dsRNA-activated antiviral enzyme which plays a critical role in cellular innate antiviral response. Activated by detection of double stranded RNA (dsRNA): polymerizes higher oligomers of 2'-5'-oligoadenylates (2-5A) from ATP which then bind to the inactive monomeric form of ribonuclease L (RNASEL) leading to its dimerization and subsequent activation. Activation of RNASEL leads to degradation of cellular as well as viral RNA, resulting in the inhibition of protein synthesis, thus terminating viral replication. Can mediate the antiviral effect via the classical RNASEL-dependent pathway or an alternative antiviral pathway independent of RNASEL. In addition, it may also play a role in other cellular processes such as apoptosis, cell growth, differentiation and gene regulation. May act as a negative regulator of lactation, stopping lactation in virally infected mammary gland lobules, thereby preventing transmission of viruses to neonates. Non-infected lobules would not be affected, allowing efficient pup feeding during infection. This is 2'-5'-oligoadenylate synthase 2 (OAS2) from Bos taurus (Bovine).